The sequence spans 223 residues: MGQKVHPHGLRVGVIKEWDAKWYADKKNFADNLVEDHKIRNFVKKNSYAAGVSRIEIERAAKRIKLNIYTAKPGMIIGKGGQGIESLKNKLQKIVSNKNILINIVEVKRPEADAQLIAENIAQQLEKRIAFRRAMKQSIQRAMKSGVKGIKTACSGRLGGAEIARTEHYNEGTIPLQTLRADIDYGFAEADTTYGKIGVKVWVYKGEVLPARKNINEKEEANA.

The 70-residue stretch at 39 to 108 (IRNFVKKNSY…NILINIVEVK (70 aa)) folds into the KH type-2 domain.

The protein belongs to the universal ribosomal protein uS3 family. Part of the 30S ribosomal subunit. Forms a tight complex with proteins S10 and S14.

In terms of biological role, binds the lower part of the 30S subunit head. Binds mRNA in the 70S ribosome, positioning it for translation. This Clostridium botulinum (strain Okra / Type B1) protein is Small ribosomal subunit protein uS3.